The chain runs to 345 residues: Dimethyladenosine transferase 1, mitochondrial (345 aa).

The transit peptide at 1 to 27 directs the protein to the mitochondrion; sequence MAAPGKLSTCRLPPLPTIREIIKLFRL. S-adenosyl-L-methionine contacts are provided by Leu-38, Gly-63, Glu-85, Lys-86, Asp-111, Val-112, and Asn-141.

The protein belongs to the class I-like SAM-binding methyltransferase superfamily. rRNA adenine N(6)-methyltransferase family. KsgA subfamily. In terms of assembly, interacts with mitochondrial RNA polymerase POLRMT. Interacts with TFAM. Bound to the maturing mtSSU until the late stages of assembly.

Its subcellular location is the mitochondrion. The catalysed reaction is adenosine(N)/adenosine(N+1) in rRNA + 4 S-adenosyl-L-methionine = N(6)-dimethyladenosine(N)/N(6)-dimethyladenosine(N+1) in rRNA + 4 S-adenosyl-L-homocysteine + 4 H(+). Mitochondrial methyltransferase which uses S-adenosyl methionine to dimethylate two highly conserved adjacent adenosine residues (A1583 and A1584) within the loop of helix 45 at the 3-prime end of 12S rRNA, thereby regulating the assembly or stability of the small subunit of the mitochondrial ribosome. Also required for basal transcription of mitochondrial DNA, probably via its interaction with POLRMT and TFAM. Stimulates transcription independently of the methyltransferase activity. This Macaca fascicularis (Crab-eating macaque) protein is Dimethyladenosine transferase 1, mitochondrial (TFB1M).